A 159-amino-acid polypeptide reads, in one-letter code: Protein-export protein SecB (159 aa).

It belongs to the SecB family. As to quaternary structure, homotetramer, a dimer of dimers. One homotetramer interacts with 1 SecA dimer.

It is found in the cytoplasm. Its function is as follows. One of the proteins required for the normal export of preproteins out of the cell cytoplasm. It is a molecular chaperone that binds to a subset of precursor proteins, maintaining them in a translocation-competent state. It also specifically binds to its receptor SecA. This chain is Protein-export protein SecB, found in Hahella chejuensis (strain KCTC 2396).